The chain runs to 625 residues: Endoglucanase D (625 aa).

An N-terminal signal peptide occupies residues 1 to 17 (SLTGVFPSGLIETKVSA). The active-site Nucleophile is D177. Residues H492 and D522 contribute to the active site. E531 (proton donor) is an active-site residue. Positions 555–625 (NEVLYGDVND…LIRVIEKLPI (71 aa)) constitute a Dockerin domain.

Belongs to the glycosyl hydrolase 9 (cellulase E) family. It depends on Ca(2+) as a cofactor.

The catalysed reaction is Endohydrolysis of (1-&gt;4)-beta-D-glucosidic linkages in cellulose, lichenin and cereal beta-D-glucans.. In terms of biological role, this enzyme catalyzes the endohydrolysis of 1,4-beta-glucosidic linkages in cellulose, lichenin and cereal beta-D-glucans. In Acetivibrio thermocellus (Hungateiclostridium thermocellum), this protein is Endoglucanase D (celD).